The sequence spans 67 residues: Protein DsrB (67 aa).

This sequence belongs to the DsrB family.

The polypeptide is Protein DsrB (Pectobacterium carotovorum subsp. carotovorum (strain PC1)).